A 269-amino-acid chain; its full sequence is Protein MGF 110-1L (269 aa).

Position 1 (Met-1) is a topological domain, cytoplasmic. One copy of the A repeat lies at 1–145 (MLGLQIFTLL…YVRKRSLQTV (145 aa)). The chain crosses the membrane as a helical span at residues 2 to 18 (LGLQIFTLLSIPTLLYT). The Extracellular segment spans residues 19–116 (YELELLDLTR…HEWHEAVIRK (98 aa)). N-linked (GlcNAc...) asparagine; by host glycosylation is present at Asn-75. The chain crosses the membrane as a helical span at residues 117–137 (WQKLLTYGFYLVGCVLVANYV). Residues 138–144 (RKRSLQT) lie on the Cytoplasmic side of the membrane. A helical transmembrane segment spans residues 145 to 165 (VMYLLVLLVIFFLLSQLMLYR). One copy of the B repeat lies at 147 to 269 (YLLVLLVIFF…DNLMKKQDMM (123 aa)). Residues 166–269 (ELEDKKHKIG…DNLMKKQDMM (104 aa)) are Extracellular-facing.

It belongs to the asfivirus MGF 110 family.

It localises to the host membrane. In terms of biological role, plays a role in virus cell tropism, and may be required for efficient virus replication in macrophages. The polypeptide is Protein MGF 110-1L (African swine fever virus (isolate Tick/South Africa/Pretoriuskop Pr4/1996) (ASFV)).